Reading from the N-terminus, the 146-residue chain is MMDINEIREYLPHRYPFLLVDRVVELDIEGKRIRAYKNVSINEPFFNGHFPEHPIMPGVLIIEAMAQAAGILGFKMLDVKPADGTLYYFVGSDKLRFRQPVLPGDQLQLHAKFISVKRSIWKFDCHATVDDKPVCSAEIICAERKL.

Residue H49 is part of the active site.

Belongs to the thioester dehydratase family. FabZ subfamily.

It localises to the cytoplasm. It catalyses the reaction a (3R)-hydroxyacyl-[ACP] = a (2E)-enoyl-[ACP] + H2O. Its function is as follows. Involved in unsaturated fatty acids biosynthesis. Catalyzes the dehydration of short chain beta-hydroxyacyl-ACPs and long chain saturated and unsaturated beta-hydroxyacyl-ACPs. The sequence is that of 3-hydroxyacyl-[acyl-carrier-protein] dehydratase FabZ from Pseudomonas aeruginosa (strain LESB58).